The primary structure comprises 132 residues: Small ribosomal subunit protein uS11 (132 aa).

This sequence belongs to the universal ribosomal protein uS11 family. As to quaternary structure, part of the 30S ribosomal subunit. Interacts with proteins S7 and S18. Binds to IF-3.

Located on the platform of the 30S subunit, it bridges several disparate RNA helices of the 16S rRNA. Forms part of the Shine-Dalgarno cleft in the 70S ribosome. The protein is Small ribosomal subunit protein uS11 of Chlamydia felis (strain Fe/C-56) (Chlamydophila felis).